The chain runs to 1301 residues: DNA-directed RNA polymerase subunit beta (1301 aa).

Belongs to the RNA polymerase beta chain family. In plastids the minimal PEP RNA polymerase catalytic core is composed of four subunits: alpha, beta, beta', and beta''. When a (nuclear-encoded) sigma factor is associated with the core the holoenzyme is formed, which can initiate transcription.

It is found in the plastid. Its subcellular location is the chloroplast. It catalyses the reaction RNA(n) + a ribonucleoside 5'-triphosphate = RNA(n+1) + diphosphate. DNA-dependent RNA polymerase catalyzes the transcription of DNA into RNA using the four ribonucleoside triphosphates as substrates. The sequence is that of DNA-directed RNA polymerase subunit beta from Chlorella vulgaris (Green alga).